The following is a 118-amino-acid chain: Ribonuclease P protein component (118 aa).

This sequence belongs to the RnpA family. Consists of a catalytic RNA component (M1 or rnpB) and a protein subunit.

The catalysed reaction is Endonucleolytic cleavage of RNA, removing 5'-extranucleotides from tRNA precursor.. Its function is as follows. RNaseP catalyzes the removal of the 5'-leader sequence from pre-tRNA to produce the mature 5'-terminus. It can also cleave other RNA substrates such as 4.5S RNA. The protein component plays an auxiliary but essential role in vivo by binding to the 5'-leader sequence and broadening the substrate specificity of the ribozyme. This Vibrio campbellii (strain ATCC BAA-1116) protein is Ribonuclease P protein component.